Here is a 398-residue protein sequence, read N- to C-terminus: 1-deoxy-D-xylulose 5-phosphate reductoisomerase (398 aa).

NADPH-binding residues include Thr11, Gly12, Ser13, Ile14, Arg38, Asn39, and Asn125. 1-deoxy-D-xylulose 5-phosphate is bound at residue Lys126. Residue Glu127 participates in NADPH binding. Asp151 contacts Mn(2+). Residues Ser152, Glu153, Ser179, and His202 each coordinate 1-deoxy-D-xylulose 5-phosphate. Glu153 contacts Mn(2+). Gly208 provides a ligand contact to NADPH. The 1-deoxy-D-xylulose 5-phosphate site is built by Ser215, Asn220, Lys221, and Glu224. A Mn(2+)-binding site is contributed by Glu224.

The protein belongs to the DXR family. It depends on Mg(2+) as a cofactor. The cofactor is Mn(2+).

The enzyme catalyses 2-C-methyl-D-erythritol 4-phosphate + NADP(+) = 1-deoxy-D-xylulose 5-phosphate + NADPH + H(+). Its pathway is isoprenoid biosynthesis; isopentenyl diphosphate biosynthesis via DXP pathway; isopentenyl diphosphate from 1-deoxy-D-xylulose 5-phosphate: step 1/6. Functionally, catalyzes the NADPH-dependent rearrangement and reduction of 1-deoxy-D-xylulose-5-phosphate (DXP) to 2-C-methyl-D-erythritol 4-phosphate (MEP). The sequence is that of 1-deoxy-D-xylulose 5-phosphate reductoisomerase from Burkholderia pseudomallei (strain 1106a).